The primary structure comprises 705 residues: MNPVIKKFQYGNDTITLETGRIARQATGAVLASMGKTSVLCTVVGAKEASPGQDFFPLSVHYQEKAYAAGKIPGGFFKREGRPSEKETLTSRLIDRPIRPLFPDGFVNEVQVVCTVVAAEKDVDPDICAMIGTSAALAISGIPFNGPIGAARVGYTQADGYLLNPTYQALASSELDMVVAGTQDAVLMVESEANELPEDIMLGAVLYAHQEMQAVVQAVNELAKDAGKPTWDWQPEAVNQALVDALKADFEESIGVAYRITDKQKRYDRLSELRSQAVAQLAGEGSDISQDDVKKVFGKLEKNIVRSRVVAGEPRIDGRDTKTVRPLQVEVGVLPKVHGSALFTRGETQALVVATLGSARDAQIIDALEGEHRDNFMLHYNFPPYSVGECGRMGATGRREIGHGRLARRGVAAMLPKEDQFPYTMRVVSEITESNGSSSMASVCGSSLALMDAGVPLKAPVAGIAMGLVKEENGFAVLTDILGDEDHLGDMDFKVAGTANGVTALQMDIKIEGITEEIMETALEQALHARLHILSEMNAVIAQPRESLSDNAPQFHTMKVDPEKIRDIIGKGGATIRSITEETGASIDIDDDGTVKIYGDDGDSLQGAINRIEEITAEAEIGEVYKGKVVRIVDFGAFVNFLPGKDGLVHISQIAHERVQNVTDYLKEGQEVDVKCMDIDQRGRIKLSIKELLPQPEETGGSDAE.

The Mg(2+) site is built by D486 and D492. In terms of domain architecture, KH spans 553 to 612 (PQFHTMKVDPEKIRDIIGKGGATIRSITEETGASIDIDDDGTVKIYGDDGDSLQGAINRI). Residues 622-690 (GEVYKGKVVR…QRGRIKLSIK (69 aa)) form the S1 motif domain.

It belongs to the polyribonucleotide nucleotidyltransferase family. In terms of assembly, component of the RNA degradosome, which is a multiprotein complex involved in RNA processing and mRNA degradation. Requires Mg(2+) as cofactor.

The protein resides in the cytoplasm. The enzyme catalyses RNA(n+1) + phosphate = RNA(n) + a ribonucleoside 5'-diphosphate. Involved in mRNA degradation. Catalyzes the phosphorolysis of single-stranded polyribonucleotides processively in the 3'- to 5'-direction. In Teredinibacter turnerae (strain ATCC 39867 / T7901), this protein is Polyribonucleotide nucleotidyltransferase.